Here is a 367-residue protein sequence, read N- to C-terminus: Ferredoxin--NADP reductase 2 (367 aa).

Residues Asp56, Gln64, Tyr69, Val109, Phe144, Asp309, and Thr350 each contribute to the FAD site.

The protein belongs to the ferredoxin--NADP reductase type 2 family. In terms of assembly, homodimer. The cofactor is FAD.

The enzyme catalyses 2 reduced [2Fe-2S]-[ferredoxin] + NADP(+) + H(+) = 2 oxidized [2Fe-2S]-[ferredoxin] + NADPH. The polypeptide is Ferredoxin--NADP reductase 2 (Cupriavidus metallidurans (strain ATCC 43123 / DSM 2839 / NBRC 102507 / CH34) (Ralstonia metallidurans)).